The sequence spans 208 residues: Large ribosomal subunit protein bL25 (208 aa).

This sequence belongs to the bacterial ribosomal protein bL25 family. CTC subfamily. In terms of assembly, part of the 50S ribosomal subunit; part of the 5S rRNA/L5/L18/L25 subcomplex. Contacts the 5S rRNA. Binds to the 5S rRNA independently of L5 and L18.

Functionally, this is one of the proteins that binds to the 5S RNA in the ribosome where it forms part of the central protuberance. This chain is Large ribosomal subunit protein bL25, found in Phenylobacterium zucineum (strain HLK1).